We begin with the raw amino-acid sequence, 275 residues long: Undecaprenyl-diphosphatase (275 aa).

8 helical membrane-spanning segments follow: residues Leu-4 to Ile-24, Ala-44 to Leu-64, Trp-85 to Leu-105, Leu-113 to Ile-133, Thr-149 to Gly-169, Phe-188 to Leu-208, Ile-226 to Leu-246, and Phe-255 to Leu-275.

This sequence belongs to the UppP family.

It localises to the cell membrane. The enzyme catalyses di-trans,octa-cis-undecaprenyl diphosphate + H2O = di-trans,octa-cis-undecaprenyl phosphate + phosphate + H(+). Catalyzes the dephosphorylation of undecaprenyl diphosphate (UPP). Confers resistance to bacitracin. This is Undecaprenyl-diphosphatase from Latilactobacillus sakei subsp. sakei (strain 23K) (Lactobacillus sakei subsp. sakei).